The chain runs to 74 residues: Translation initiation factor IF-1 (74 aa).

An S1-like domain is found at 1 to 72; the sequence is MSKEDAIEME…NKGRITYRLK (72 aa).

The protein belongs to the IF-1 family. In terms of assembly, component of the 30S ribosomal translation pre-initiation complex which assembles on the 30S ribosome in the order IF-2 and IF-3, IF-1 and N-formylmethionyl-tRNA(fMet); mRNA recruitment can occur at any time during PIC assembly.

Its subcellular location is the cytoplasm. One of the essential components for the initiation of protein synthesis. Stabilizes the binding of IF-2 and IF-3 on the 30S subunit to which N-formylmethionyl-tRNA(fMet) subsequently binds. Helps modulate mRNA selection, yielding the 30S pre-initiation complex (PIC). Upon addition of the 50S ribosomal subunit IF-1, IF-2 and IF-3 are released leaving the mature 70S translation initiation complex. The sequence is that of Translation initiation factor IF-1 from Synechococcus sp. (strain JA-2-3B'a(2-13)) (Cyanobacteria bacterium Yellowstone B-Prime).